We begin with the raw amino-acid sequence, 237 residues long: Pyridoxal 5'-phosphate synthase subunit PdxS (237 aa).

Lysine 19 serves as the catalytic Schiff-base intermediate with D-ribose 5-phosphate. Position 91 (glycine 91) interacts with D-ribose 5-phosphate. A D-glyceraldehyde 3-phosphate-binding site is contributed by arginine 103. D-ribose 5-phosphate contacts are provided by residues glycine 157 and glycine 178–serine 179.

The protein belongs to the PdxS/SNZ family. In the presence of PdxT, forms a dodecamer of heterodimers.

The catalysed reaction is aldehydo-D-ribose 5-phosphate + D-glyceraldehyde 3-phosphate + L-glutamine = pyridoxal 5'-phosphate + L-glutamate + phosphate + 3 H2O + H(+). It functions in the pathway cofactor biosynthesis; pyridoxal 5'-phosphate biosynthesis. Functionally, catalyzes the formation of pyridoxal 5'-phosphate from ribose 5-phosphate (RBP), glyceraldehyde 3-phosphate (G3P) and ammonia. The ammonia is provided by the PdxT subunit. Can also use ribulose 5-phosphate and dihydroxyacetone phosphate as substrates, resulting from enzyme-catalyzed isomerization of RBP and G3P, respectively. The protein is Pyridoxal 5'-phosphate synthase subunit PdxS of Methanococcus vannielii.